Here is a 231-residue protein sequence, read N- to C-terminus: Octanoyltransferase (231 aa).

The BPL/LPL catalytic domain maps to 49 to 231 (SEAAEQVWLL…KRTFSEVFGS (183 aa)). Substrate contacts are provided by residues 87–94 (RGGQITYH), 162–164 (AIG), and 175–177 (GVS). The active-site Acyl-thioester intermediate is C193.

The protein belongs to the LipB family.

The protein localises to the cytoplasm. It catalyses the reaction octanoyl-[ACP] + L-lysyl-[protein] = N(6)-octanoyl-L-lysyl-[protein] + holo-[ACP] + H(+). It functions in the pathway protein modification; protein lipoylation via endogenous pathway; protein N(6)-(lipoyl)lysine from octanoyl-[acyl-carrier-protein]: step 1/2. Catalyzes the transfer of endogenously produced octanoic acid from octanoyl-acyl-carrier-protein onto the lipoyl domains of lipoate-dependent enzymes. Lipoyl-ACP can also act as a substrate although octanoyl-ACP is likely to be the physiological substrate. This chain is Octanoyltransferase, found in Nitrobacter winogradskyi (strain ATCC 25391 / DSM 10237 / CIP 104748 / NCIMB 11846 / Nb-255).